A 407-amino-acid polypeptide reads, in one-letter code: 4-hydroxy-3-methylbut-2-en-1-yl diphosphate synthase (ferredoxin) (407 aa).

[4Fe-4S] cluster-binding residues include cysteine 316, cysteine 319, cysteine 350, and glutamate 357.

The protein belongs to the IspG family. The cofactor is [4Fe-4S] cluster.

The catalysed reaction is (2E)-4-hydroxy-3-methylbut-2-enyl diphosphate + 2 oxidized [2Fe-2S]-[ferredoxin] + H2O = 2-C-methyl-D-erythritol 2,4-cyclic diphosphate + 2 reduced [2Fe-2S]-[ferredoxin] + H(+). It functions in the pathway isoprenoid biosynthesis; isopentenyl diphosphate biosynthesis via DXP pathway; isopentenyl diphosphate from 1-deoxy-D-xylulose 5-phosphate: step 5/6. Converts 2C-methyl-D-erythritol 2,4-cyclodiphosphate (ME-2,4cPP) into 1-hydroxy-2-methyl-2-(E)-butenyl 4-diphosphate. This is 4-hydroxy-3-methylbut-2-en-1-yl diphosphate synthase (ferredoxin) from Cyanothece sp. (strain PCC 7425 / ATCC 29141).